We begin with the raw amino-acid sequence, 302 residues long: Sulfate adenylyltransferase subunit 2 (302 aa).

The disordered stretch occupies residues 280–302 (RQGRAIDHDQSGSMELKKRQGYF).

It belongs to the PAPS reductase family. CysD subfamily. In terms of assembly, heterodimer composed of CysD, the smaller subunit, and CysN.

It carries out the reaction sulfate + ATP + H(+) = adenosine 5'-phosphosulfate + diphosphate. The protein operates within sulfur metabolism; hydrogen sulfide biosynthesis; sulfite from sulfate: step 1/3. Functionally, with CysN forms the ATP sulfurylase (ATPS) that catalyzes the adenylation of sulfate producing adenosine 5'-phosphosulfate (APS) and diphosphate, the first enzymatic step in sulfur assimilation pathway. APS synthesis involves the formation of a high-energy phosphoric-sulfuric acid anhydride bond driven by GTP hydrolysis by CysN coupled to ATP hydrolysis by CysD. In Vibrio atlanticus (strain LGP32) (Vibrio splendidus (strain Mel32)), this protein is Sulfate adenylyltransferase subunit 2.